Consider the following 643-residue polypeptide: Phosphatidylinositol-3,5-bisphosphate 3-phosphatase MTMR2 (643 aa).

2 stretches are compositionally biased toward polar residues: residues 1–12 and 23–40; these read MEKSSSCESLGS and DSLS…VHTK. Residues 1–56 form a disordered region; that stretch reads MEKSSSCESLGSQPAAARPPSVDSLSSASTSHSENSVHTKSASVVSSDSISTSADN. Residues serine 6 and serine 9 each carry the phosphoserine modification. Over residues 41-55 the composition is skewed to low complexity; that stretch reads SASVVSSDSISTSAD. A Phosphoserine modification is found at serine 58. The region spanning 68–139 is the GRAM domain; it reads NKLAEMEEPP…GVINRVEKIG (72 aa). The Myotubularin phosphatase domain occupies 205-580; it reads GWKLYDPLLE…RHLELWVGYY (376 aa). Positions 330, 355, and 356 each coordinate a 1,2-diacyl-sn-glycero-3-phospho-(1D-myo-inositol-3,5-bisphosphate). 3 residues coordinate a 1,2-diacyl-sn-glycero-3-phospho-(1D-myo-inositol-3-phosphate): asparagine 330, asparagine 355, and isoleucine 356. The active-site Phosphocysteine intermediate is cysteine 417. A 1,2-diacyl-sn-glycero-3-phospho-(1D-myo-inositol-3,5-bisphosphate) contacts are provided by serine 418, aspartate 419, glycine 420, tryptophan 421, aspartate 422, arginine 423, arginine 459, and arginine 463. A 1,2-diacyl-sn-glycero-3-phospho-(1D-myo-inositol-3-phosphate) contacts are provided by serine 418, aspartate 419, glycine 420, tryptophan 421, aspartate 422, and arginine 423. Arginine 463 is an a 1,2-diacyl-sn-glycero-3-phospho-(1D-myo-inositol-3-phosphate) binding site. A coiled-coil region spans residues 593–627; it reads IHNRYKELLAKRAELQKKVEELQREISNRSTSSSE. A disordered region spans residues 615–643; that stretch reads QREISNRSTSSSERASSPAQCVTPVQTVV. Over residues 620-631 the composition is skewed to low complexity; sequence NRSTSSSERASS. Over residues 632-643 the composition is skewed to polar residues; the sequence is PAQCVTPVQTVV.

The protein belongs to the protein-tyrosine phosphatase family. Non-receptor class myotubularin subfamily. In terms of assembly, homodimer (via coiled-coil domain). Heterotetramer consisting of one MTMR2 dimer and one SBF2/MTMR13 dimer; specifically in peripheral nerves stabilizes SBF2/MTMR13 at the membranes and increases MTMR2 catalytic activity towards phosphatidylinositol 3,5-bisphosphate and to a lesser extent towards phosphatidylinositol 3-phosphate. Heterodimer with SBF1/MTMR5; acts as an adapter for the phosphatase MTMR2 to regulate MTMR2 catalytic activity and subcellular location. Heterodimer with MTMR12. Phosphorylation at Ser-58 decreases MTMR2 localization to endocytic vesicular structures.

Its subcellular location is the cytoplasm. It localises to the early endosome membrane. It is found in the perinuclear region. The protein resides in the cell projection. The protein localises to the axon. Its subcellular location is the endosome membrane. The catalysed reaction is a 1,2-diacyl-sn-glycero-3-phospho-(1D-myo-inositol-3,5-bisphosphate) + H2O = a 1,2-diacyl-sn-glycero-3-phospho-(1D-myo-inositol-5-phosphate) + phosphate. It catalyses the reaction a 1,2-diacyl-sn-glycero-3-phospho-(1D-myo-inositol-3-phosphate) + H2O = a 1,2-diacyl-sn-glycero-3-phospho-(1D-myo-inositol) + phosphate. The enzyme catalyses 1,2-dioctanoyl-sn-glycero-3-phospho-(1-D-myo-inositol-3-phosphate) + H2O = 1,2-dioctanoyl-sn-glycero-3-phospho-(1D-myo-inositol) + phosphate. It carries out the reaction 1,2-dioctanoyl-sn-glycero-3-phospho-(1D-myo-inositol-3,5-bisphosphate) + H2O = 1,2-dioctanoyl-sn-glycero-3-phospho-(1D-myo-inositol-5-phosphate) + phosphate. Lipid phosphatase that specifically dephosphorylates the D-3 position of phosphatidylinositol 3-phosphate and phosphatidylinositol 3,5-bisphosphate, generating phosphatidylinositol and phosphatidylinositol 5-phosphate. Regulates the level of these phosphoinositides critical for various biological processes including autophagy initiation and autophagosome maturation. In Pongo abelii (Sumatran orangutan), this protein is Phosphatidylinositol-3,5-bisphosphate 3-phosphatase MTMR2.